A 293-amino-acid polypeptide reads, in one-letter code: SAGA-associated factor 29 (293 aa).

Residues 3-88 (LVSADSRIAE…KALDKIAEIK (86 aa)) are a coiled coil. Positions 152-293 (GDYVAKPGDK…VVACKEPKKK (142 aa)) constitute an SGF29 C-terminal domain. 2 histone H3K4me3 N-terminus binding regions span residues 194-196 (DID) and 240-243 (QTTC). The tract at residues 264-266 (FED) is histone H3K4me3 binding. Lys288 carries the N6-acetyllysine modification.

It belongs to the SGF29 family. In terms of assembly, interacts with dimethylated and trimethylated 'Lys-4' of histone H3 (H3K4me2 and H3K4me3), with a preference for the trimethylated form (H3K4me3). Component of some SAGA-type complexes. Component of the ADA2A-containing complex (ATAC), composed of KAT14, KAT2A, TADA2L, TADA3L, ZZ3, MBIP, WDR5, YEATS2, CCDC101 and DR1. Interacts with (methylated) CGAS. Interacts with TADA3L, GCN5L2, SUPT3H and MYC. In terms of tissue distribution, widely expressed with highest levels in testis. Highly expressed in hepatoma and other tumor cell lines.

Its subcellular location is the nucleus. Chromatin reader component of some histone acetyltransferase (HAT) SAGA-type complexes like the TFTC-HAT, ATAC or STAGA complexes. SGF29 specifically recognizes and binds methylated 'Lys-4' of histone H3 (H3K4me), with a preference for trimethylated form (H3K4me3). In the SAGA-type complexes, SGF29 is required to recruit complexes to H3K4me. Involved in the response to endoplasmic reticulum (ER) stress by recruiting the SAGA complex to H3K4me, thereby promoting histone H3 acetylation and cell survival. Also binds non-histone proteins that are methylated on Lys residues: specifically recognizes and binds CGAS monomethylated on 'Lys-491'. May be involved in MYC-mediated oncogenic transformation. This chain is SAGA-associated factor 29, found in Rattus norvegicus (Rat).